A 194-amino-acid chain; its full sequence is Putative manganese efflux pump MntP (194 aa).

Helical transmembrane passes span 3–23, 40–60, 65–85, 109–129, 134–154, and 169–189; these read FYAT…VAVC, GFIF…LGLY, IIQW…GRMI, LIAT…GLAF, IVHT…LGML, and IIGG…HLDL.

This sequence belongs to the MntP (TC 9.B.29) family.

It is found in the cell inner membrane. Its function is as follows. Probably functions as a manganese efflux pump. In Proteus mirabilis (strain HI4320), this protein is Putative manganese efflux pump MntP.